We begin with the raw amino-acid sequence, 75 residues long: UPF0270 protein Avin_35000 (75 aa).

Belongs to the UPF0270 family.

The chain is UPF0270 protein Avin_35000 from Azotobacter vinelandii (strain DJ / ATCC BAA-1303).